The chain runs to 288 residues: Elongation factor Ts (288 aa).

The tract at residues 82 to 85 (TDFV) is involved in Mg(2+) ion dislocation from EF-Tu.

This sequence belongs to the EF-Ts family.

The protein resides in the cytoplasm. In terms of biological role, associates with the EF-Tu.GDP complex and induces the exchange of GDP to GTP. It remains bound to the aminoacyl-tRNA.EF-Tu.GTP complex up to the GTP hydrolysis stage on the ribosome. The polypeptide is Elongation factor Ts (Chlorobium phaeobacteroides (strain BS1)).